The sequence spans 116 residues: UPF0127 protein PF1050 (116 aa).

Belongs to the UPF0127 family.

In Pyrococcus furiosus (strain ATCC 43587 / DSM 3638 / JCM 8422 / Vc1), this protein is UPF0127 protein PF1050.